A 331-amino-acid chain; its full sequence is Phenylalanine--tRNA ligase alpha subunit (331 aa).

Residue glutamate 252 participates in Mg(2+) binding.

The protein belongs to the class-II aminoacyl-tRNA synthetase family. Phe-tRNA synthetase alpha subunit type 1 subfamily. Tetramer of two alpha and two beta subunits. The cofactor is Mg(2+).

The protein resides in the cytoplasm. It catalyses the reaction tRNA(Phe) + L-phenylalanine + ATP = L-phenylalanyl-tRNA(Phe) + AMP + diphosphate + H(+). This Xanthomonas euvesicatoria pv. vesicatoria (strain 85-10) (Xanthomonas campestris pv. vesicatoria) protein is Phenylalanine--tRNA ligase alpha subunit.